Reading from the N-terminus, the 122-residue chain is Large ribosomal subunit protein uL14 (122 aa).

It belongs to the universal ribosomal protein uL14 family. Part of the 50S ribosomal subunit. Forms a cluster with proteins L3 and L19. In the 70S ribosome, L14 and L19 interact and together make contacts with the 16S rRNA in bridges B5 and B8.

Its function is as follows. Binds to 23S rRNA. Forms part of two intersubunit bridges in the 70S ribosome. The protein is Large ribosomal subunit protein uL14 of Verminephrobacter eiseniae (strain EF01-2).